Here is a 217-residue protein sequence, read N- to C-terminus: Pro-Pro endopeptidase (217 aa).

A signal peptide spans 1–27 (MKWDKRVVALILAVMIVCPLFAAPAHA). In terms of domain architecture, ATLF-like spans 30 to 216 (QSILDKLVVL…TYEFMAKLFA (187 aa)). The interval 112–115 (SERV) is plays a crucial role in substrate specificity. His-137 is a Zn(2+) binding site. Catalysis depends on Glu-138, which acts as the Proton acceptor. Zn(2+) contacts are provided by His-141, Tyr-174, and Glu-181.

It belongs to the peptidase M34 family. Pro-Pro endopeptidase subfamily. As to quaternary structure, monomer. It depends on Zn(2+) as a cofactor.

It is found in the secreted. It carries out the reaction The enzyme catalyzes the hydrolytic cleavage of peptide bonds between two proline residues.. In terms of biological role, zinc-dependent endoprotease with a unique preference for proline residues surrounding the scissile bond, which cleaves in a PLP-|-PVP motif. Cleaves the cell surface protein encoded by an adjacent gene, which contains two PPEP-2 cleaving sites and putative extracellular matrix-binding domains. Thereby, may have a role in the regulation of P.alvei adhesion. Is not able to cleave within the PVP-|-PVQ motif, and only shows a very poor cleavage of the VNP-|-PVP motif in vitro, which is the optimal substrate peptide for PPEP-1 from P.difficile. This Paenibacillus alvei (strain ATCC 6344 / DSM 29 / NBRC 3343 / NCIMB 9371 / NCTC 6352) (Bacillus alvei) protein is Pro-Pro endopeptidase.